The primary structure comprises 70 residues: uncharacterized protein (70 aa).

This is an uncharacterized protein from Swinepox virus (strain Kasza) (SWPV).